The following is a 205-amino-acid chain: Ras-related protein RABD1 (205 aa).

Serine 2 bears the N-acetylserine mark. Residues 15-23 (GDSSVGKSC), 33-40 (YIDSYIST), 63-67 (DTAGQ), 121-124 (NKND), and 151-153 (SAK) each bind GTP. The short motif at 37–45 (YISTIGVDF) is the Effector region element. 2 stretches are compositionally biased toward polar residues: residues 174–186 (GSQT…SGPG) and 194–205 (PIQQNNGGCCGQ). Residues 174–205 (GSQTNANKTSGPGTVQMKGQPIQQNNGGCCGQ) form a disordered region. S-geranylgeranyl cysteine attachment occurs at residues cysteine 202 and cysteine 203.

This sequence belongs to the small GTPase superfamily. Rab family. Does not interact with GC5. Interacts with XI-2/MYA2.

It localises to the golgi apparatus. The protein localises to the trans-Golgi network membrane. It is found in the golgi apparatus membrane. Functionally, protein transport. Regulator of membrane traffic from the Golgi apparatus towards the endoplasmic reticulum (ER). The chain is Ras-related protein RABD1 (RABD1) from Arabidopsis thaliana (Mouse-ear cress).